The sequence spans 279 residues: Dehydrogenase/reductase SDR family member 4 (279 aa).

Residue 37–61 (LVTASTDGIGFAIARRLAEDGAHVV) coordinates NADP(+). At Lys-93 the chain carries N6-acetyllysine; alternate. Lys-93 bears the N6-succinyllysine; alternate mark. An N6-acetyllysine modification is found at Lys-106. Ser-170 contacts substrate. Residue Tyr-183 is the Proton acceptor of the active site. An NADP(+)-binding site is contributed by Lys-187. Lys-217 carries the N6-acetyllysine; alternate modification. Lys-217 is modified (N6-succinyllysine; alternate). Ser-221 carries the post-translational modification Phosphoserine. 2 positions are modified to N6-succinyllysine: Lys-228 and Lys-235. Residues 277 to 279 (SRL) carry the Peroxisomal targeting signal motif.

This sequence belongs to the short-chain dehydrogenases/reductases (SDR) family. As to quaternary structure, homotetramer.

It localises to the peroxisome. The enzyme catalyses a secondary alcohol + NADP(+) = a ketone + NADPH + H(+). It catalyses the reaction 3alpha-hydroxy-5beta-pregnan-20-one + NADP(+) = 5beta-pregnan-3,20-dione + NADPH + H(+). The catalysed reaction is 5beta-dihydrotestosterone + NADPH + H(+) = 5beta-androstane-3alpha,17beta-diol + NADP(+). It carries out the reaction all-trans-retinol + NADP(+) = all-trans-retinal + NADPH + H(+). The enzyme catalyses isatin + NADPH + H(+) = 3-hydroxyindolin-2-one + NADP(+). NADPH-dependent oxidoreductase which catalyzes the reduction of a variety of compounds bearing carbonyl groups including ketosteroids, alpha-dicarbonyl compounds, aldehydes, aromatic ketones and quinones. Reduces all-trans-retinal and 9-cis retinal. Reduces 3-ketosteroids and benzil into 3alpha-hydroxysteroids and S-benzoin, respectively, in contrast to the stereoselectivity of primates DHRS4s which produce 3beta-hydroxysteroids and R-benzoin. In the reverse reaction, catalyzes the NADP-dependent oxidation of 3alpha-hydroxysteroids and alcohol, but with much lower efficiency. Involved in the metabolism of 3alpha-hydroxysteroids, retinoid, isatin and xenobiotic carbonyl compounds. This Mus musculus (Mouse) protein is Dehydrogenase/reductase SDR family member 4.